Here is a 97-residue protein sequence, read N- to C-terminus: Large ribosomal subunit protein uL23 (97 aa).

The protein belongs to the universal ribosomal protein uL23 family. In terms of assembly, part of the 50S ribosomal subunit. Contacts protein L29, and trigger factor when it is bound to the ribosome.

Functionally, one of the early assembly proteins it binds 23S rRNA. One of the proteins that surrounds the polypeptide exit tunnel on the outside of the ribosome. Forms the main docking site for trigger factor binding to the ribosome. This chain is Large ribosomal subunit protein uL23, found in Brucella suis (strain ATCC 23445 / NCTC 10510).